A 251-amino-acid polypeptide reads, in one-letter code: MTSLVSLENVSVSFGQRRVLSDVSLELSPGKILTLLGPNGAGKSTLVRVVLGLVAPDEGVIKRNGQLRIGYVPQKLYLDTTLPLTVNRFLRLRPCTQKTDILPALKRVQAGHLIDAPMQKLSGGETQRVLLARALLNRPQLLVLDEPTQGVDVNGQVALYDLIDQLRRELDCAVLMVSHDLHLVMAKTDEVLCLNHHICCSGAPEVVSMHPEFISMFGPRGAEQLGIYRHHHNHRHDLQGRIVLRRGNGHS.

Residues 5–220 form the ABC transporter domain; that stretch reads VSLENVSVSF…PEFISMFGPR (216 aa). 37–44 is an ATP binding site; sequence GPNGAGKS.

The protein belongs to the ABC transporter superfamily. Zinc importer (TC 3.A.1.15.5) family. The complex is composed of two ATP-binding proteins (ZnuC), two transmembrane proteins (ZnuB) and a solute-binding protein (ZnuA).

Its subcellular location is the cell inner membrane. The catalysed reaction is Zn(2+)(out) + ATP(in) + H2O(in) = Zn(2+)(in) + ADP(in) + phosphate(in) + H(+)(in). Part of the ABC transporter complex ZnuABC involved in zinc import. Responsible for energy coupling to the transport system. The polypeptide is Zinc import ATP-binding protein ZnuC (Salmonella typhi).